Here is a 357-residue protein sequence, read N- to C-terminus: MRLSDFSFELPESLVAQYPLEKRSDCRLLCLNGETGTMTEGVFTDLLYQLEQGDLLVLNNTRVIPARVFGRKPSGGKLEILVERILSPNRVLVHLKSSKTPKLGAQFLLGDTANIPVTLMARHASLFELRFDVREDALMLLQSIGHIPLPPYIPRADEPKDHELYQTVYGQHLGAVAAPTAGLHFDNPLLNALKARGIETAFVTLHVGAGTFQPVKTDNITEHVMHSEYAEVSQEVVDAVLACKARGKRVVAVGTTSVRSLETAAQKTKNSFLTPFSGETSIFIYPGYQYQIVDALITNFHLPKSTLIMLVCAFAGYQNTLRAYKKAIDEKYRFFSYGDAMFISHNPKAAQENRVKK.

The protein belongs to the QueA family. In terms of assembly, monomer.

It is found in the cytoplasm. It catalyses the reaction 7-aminomethyl-7-carbaguanosine(34) in tRNA + S-adenosyl-L-methionine = epoxyqueuosine(34) in tRNA + adenine + L-methionine + 2 H(+). It participates in tRNA modification; tRNA-queuosine biosynthesis. In terms of biological role, transfers and isomerizes the ribose moiety from AdoMet to the 7-aminomethyl group of 7-deazaguanine (preQ1-tRNA) to give epoxyqueuosine (oQ-tRNA). The protein is S-adenosylmethionine:tRNA ribosyltransferase-isomerase of Hamiltonella defensa subsp. Acyrthosiphon pisum (strain 5AT).